The primary structure comprises 264 residues: tRNA (guanine-N(1)-)-methyltransferase (264 aa).

149 to 154 (IGDYVL) lines the S-adenosyl-L-methionine pocket.

This sequence belongs to the RNA methyltransferase TrmD family. Homodimer.

The protein resides in the cytoplasm. The catalysed reaction is guanosine(37) in tRNA + S-adenosyl-L-methionine = N(1)-methylguanosine(37) in tRNA + S-adenosyl-L-homocysteine + H(+). Its function is as follows. Specifically methylates guanosine-37 in various tRNAs. The polypeptide is tRNA (guanine-N(1)-)-methyltransferase (Methylobacillus flagellatus (strain ATCC 51484 / DSM 6875 / VKM B-1610 / KT)).